The following is a 1146-amino-acid chain: Inositol hexakisphosphate and diphosphoinositol-pentakisphosphate kinase (1146 aa).

The disordered stretch occupies residues 1 to 33 (MSGIKKEPIESDEVPQQETKNNLPSAPSEMSPL). Over residues 16 to 25 (QQETKNNLPS) the composition is skewed to polar residues. A phosphoserine mark is found at S31, S54, and S77. The interval 93-185 (TALGNGNNTN…STSHPKPRLP (93 aa)) is disordered. Over residues 96-106 (GNGNNTNTVTT) the composition is skewed to low complexity. The span at 110–120 (KKADSESKSEA) shows a compositional bias: basic and acidic residues. Polar residues predominate over residues 125-144 (LSNSNIVNDADNINSISKTG). The span at 164–178 (SVPTSSASSRKSSTS) shows a compositional bias: low complexity. Residue 197 to 198 (AK) coordinates substrate. ATP-binding positions include R278, K351, H358, R377, 402 to 405 (EQFM), and 412 to 414 (DVK). 377–378 (RK) serves as a coordination point for substrate. The substrate site is built by K414 and R428. Residues S430, D475, and 487-489 (DVN) each bind ATP. 492–495 (SFVK) contributes to the substrate binding site. The interval 530 to 597 (REEKEQKWVF…VLQALRIALD (68 aa)) is polyphosphoinositide-binding domain. A phosphoserine mark is found at S895 and S1107. The interval 1106 to 1146 (TSPNLSFQKRKTRRKSVSVEKLKRPASSGSSSSTSVNKTLD) is disordered.

It belongs to the histidine acid phosphatase family. VIP1 subfamily.

It localises to the cytoplasm. It is found in the cytoskeleton. It catalyses the reaction 1D-myo-inositol hexakisphosphate + ATP = 1-diphospho-1D-myo-inositol 2,3,4,5,6-pentakisphosphate + ADP. The catalysed reaction is 5-diphospho-1D-myo-inositol 1,2,3,4,6-pentakisphosphate + ATP + H(+) = 1,5-bis(diphospho)-1D-myo-inositol 2,3,4,6-tetrakisphosphate + ADP. Functionally, bifunctional inositol kinase that acts in concert with the IP6K kinases to synthesize the diphosphate group-containing inositol pyrophosphates diphosphoinositol pentakisphosphate, PP-InsP5, and bis-diphosphoinositol tetrakisphosphate, (PP)2-InsP4. Phosphorylates inositol hexakisphosphate (InsP6) at position 1 to produce PP-InsP5 which is in turn phosphorylated by IP6Ks to produce (PP)2-InsP4. Alternatively, phosphorylates PP-InsP5 at position 1, produced by IP6Ks from InsP6, to produce (PP)2-InsP4. Required for maintaining cellular integrity, normal growth and interactions with the ARP complex. Acts as a regulator of the PHO80-PHO85 cyclin/cyclin-dependent kinase (CDK) complex, thereby regulating signaling of phosphate availability. Required for the function of the cortical actin cytoskeleton, possibly by participating in correct F-actin localization and ensuring polarized growth. Regulates polarized growth and modulates interphase microtubule cytoskeleton. Regulates microtubule dynamics without the requirement of microtubule plus-end tracking protein Mal3. Required for growth zone selection. The polypeptide is Inositol hexakisphosphate and diphosphoinositol-pentakisphosphate kinase (Saccharomyces cerevisiae (strain ATCC 204508 / S288c) (Baker's yeast)).